The following is a 209-amino-acid chain: Thiamine-phosphate synthase (209 aa).

4-amino-2-methyl-5-(diphosphooxymethyl)pyrimidine contacts are provided by residues 37–41 (QLREK) and N69. Mg(2+) is bound by residues D70 and D89. S108 is a 4-amino-2-methyl-5-(diphosphooxymethyl)pyrimidine binding site. 2-[(2R,5Z)-2-carboxy-4-methylthiazol-5(2H)-ylidene]ethyl phosphate is bound at residue 134–136 (TNT). 4-amino-2-methyl-5-(diphosphooxymethyl)pyrimidine is bound at residue K137. Residues G164 and 184 to 185 (VS) contribute to the 2-[(2R,5Z)-2-carboxy-4-methylthiazol-5(2H)-ylidene]ethyl phosphate site.

Belongs to the thiamine-phosphate synthase family. Requires Mg(2+) as cofactor.

It catalyses the reaction 2-[(2R,5Z)-2-carboxy-4-methylthiazol-5(2H)-ylidene]ethyl phosphate + 4-amino-2-methyl-5-(diphosphooxymethyl)pyrimidine + 2 H(+) = thiamine phosphate + CO2 + diphosphate. It carries out the reaction 2-(2-carboxy-4-methylthiazol-5-yl)ethyl phosphate + 4-amino-2-methyl-5-(diphosphooxymethyl)pyrimidine + 2 H(+) = thiamine phosphate + CO2 + diphosphate. The enzyme catalyses 4-methyl-5-(2-phosphooxyethyl)-thiazole + 4-amino-2-methyl-5-(diphosphooxymethyl)pyrimidine + H(+) = thiamine phosphate + diphosphate. The protein operates within cofactor biosynthesis; thiamine diphosphate biosynthesis; thiamine phosphate from 4-amino-2-methyl-5-diphosphomethylpyrimidine and 4-methyl-5-(2-phosphoethyl)-thiazole: step 1/1. Functionally, condenses 4-methyl-5-(beta-hydroxyethyl)thiazole monophosphate (THZ-P) and 2-methyl-4-amino-5-hydroxymethyl pyrimidine pyrophosphate (HMP-PP) to form thiamine monophosphate (TMP). The sequence is that of Thiamine-phosphate synthase from Methanobrevibacter smithii (strain ATCC 35061 / DSM 861 / OCM 144 / PS).